The primary structure comprises 270 residues: Orotidine 5'-phosphate decarboxylase (270 aa).

The active-site Proton donor is the Lys-89.

This sequence belongs to the OMP decarboxylase family. Type 2 subfamily.

The catalysed reaction is orotidine 5'-phosphate + H(+) = UMP + CO2. The protein operates within pyrimidine metabolism; UMP biosynthesis via de novo pathway; UMP from orotate: step 2/2. In Dehalococcoides mccartyi (strain ATCC BAA-2100 / JCM 16839 / KCTC 5957 / BAV1), this protein is Orotidine 5'-phosphate decarboxylase.